We begin with the raw amino-acid sequence, 440 residues long: L-gulonolactone oxidase (440 aa).

The FAD-binding PCMH-type domain maps to 17-187 (YGCSPEMYYQ…LTVTLQCVPQ (171 aa)). Histidine 54 is modified (pros-8alpha-FAD histidine). A helical membrane pass occupies residues 251 to 273 (IGFYLLEFLLWTSTYLPRLVGWI).

Belongs to the oxygen-dependent FAD-linked oxidoreductase family. FAD is required as a cofactor. As to expression, highly expressed in liver.

It is found in the microsome membrane. Its subcellular location is the endoplasmic reticulum membrane. It carries out the reaction L-gulono-1,4-lactone + O2 = L-ascorbate + H2O2 + H(+). The protein operates within cofactor biosynthesis; L-ascorbate biosynthesis via UDP-alpha-D-glucuronate pathway; L-ascorbate from UDP-alpha-D-glucuronate: step 4/4. Oxidizes L-gulono-1,4-lactone to hydrogen peroxide and L-xylo-hexulonolactone which spontaneously isomerizes to L-ascorbate. The polypeptide is L-gulonolactone oxidase (Gulo) (Mus musculus (Mouse)).